Reading from the N-terminus, the 347-residue chain is GMP reductase (347 aa).

Residue 108-131 (ADFQKTKDIMALTEDLIFICIDIA) participates in NADP(+) binding. Residues glycine 181 and glycine 183 each coordinate K(+). Cysteine 186 (thioimidate intermediate) is an active-site residue. Position 216 to 239 (216 to 239 (IIGDGGCSCAGDVSKAFGGGADFV)) interacts with NADP(+).

It belongs to the IMPDH/GMPR family. GuaC type 1 subfamily. As to quaternary structure, homotetramer.

The catalysed reaction is IMP + NH4(+) + NADP(+) = GMP + NADPH + 2 H(+). Functionally, catalyzes the irreversible NADPH-dependent deamination of GMP to IMP. It functions in the conversion of nucleobase, nucleoside and nucleotide derivatives of G to A nucleotides, and in maintaining the intracellular balance of A and G nucleotides. The sequence is that of GMP reductase from Photobacterium profundum (strain SS9).